Reading from the N-terminus, the 196-residue chain is Putative NADH dehydrogenase/NAD(P)H nitroreductase PST_3601 (196 aa).

This sequence belongs to the nitroreductase family. HadB/RutE subfamily. Requires FMN as cofactor.

The polypeptide is Putative NADH dehydrogenase/NAD(P)H nitroreductase PST_3601 (Stutzerimonas stutzeri (strain A1501) (Pseudomonas stutzeri)).